Reading from the N-terminus, the 360-residue chain is Ribosomal RNA large subunit methyltransferase M (360 aa).

Residues Ser-187, 220–223 (CPGG), Asp-239, Asp-259, and Asp-276 each bind S-adenosyl-L-methionine. The active-site Proton acceptor is the Lys-305.

It belongs to the class I-like SAM-binding methyltransferase superfamily. RNA methyltransferase RlmE family. RlmM subfamily. Monomer.

It is found in the cytoplasm. It carries out the reaction cytidine(2498) in 23S rRNA + S-adenosyl-L-methionine = 2'-O-methylcytidine(2498) in 23S rRNA + S-adenosyl-L-homocysteine + H(+). Catalyzes the 2'-O-methylation at nucleotide C2498 in 23S rRNA. This Shewanella pealeana (strain ATCC 700345 / ANG-SQ1) protein is Ribosomal RNA large subunit methyltransferase M.